Reading from the N-terminus, the 85-residue chain is Beta-insect depressant toxin Lqh-dprIT3b (85 aa).

An N-terminal signal peptide occupies residues 1 to 21 (MKLLLLLTISASMLIEGLVNA). The 61-residue stretch at 22–82 (DGYIRGGDGC…EWDYETNTCG (61 aa)) folds into the LCN-type CS-alpha/beta domain. 4 disulfide bridges follow: Cys31/Cys81, Cys35/Cys56, Cys42/Cys63, and Cys46/Cys65. Residue Gly82 is modified to Glycine amide.

This sequence belongs to the long (4 C-C) scorpion toxin superfamily. Sodium channel inhibitor family. Beta subfamily. Expressed by the venom gland.

The protein resides in the secreted. Its function is as follows. Depressant insect beta-toxins cause a transient contraction paralysis followed by a slow flaccid paralysis. They bind voltage-independently at site-4 of sodium channels (Nav) and block action potentials, primarily by depolarizing the axonal membrane and suppressing the sodium current. This depressant toxin is active only on insects. It is found in a relatively small amount in the venom, and its activity on insects is 10-fold higher compared to other known depressant toxins. In Leiurus hebraeus (Hebrew deathstalker scorpion), this protein is Beta-insect depressant toxin Lqh-dprIT3b.